Reading from the N-terminus, the 278-residue chain is Dermonecrotic toxin LhSicTox-alphaIV1ii (278 aa).

Residue histidine 5 is part of the active site. 2 residues coordinate Mg(2+): glutamate 25 and aspartate 27. Residue histidine 41 is the Nucleophile of the active site. 2 disulfide bridges follow: cysteine 45–cysteine 51 and cysteine 47–cysteine 192. Aspartate 85 serves as a coordination point for Mg(2+).

The protein belongs to the arthropod phospholipase D family. Class II subfamily. It depends on Mg(2+) as a cofactor. As to expression, expressed by the venom gland.

It localises to the secreted. The catalysed reaction is an N-(acyl)-sphingosylphosphocholine = an N-(acyl)-sphingosyl-1,3-cyclic phosphate + choline. It carries out the reaction an N-(acyl)-sphingosylphosphoethanolamine = an N-(acyl)-sphingosyl-1,3-cyclic phosphate + ethanolamine. The enzyme catalyses a 1-acyl-sn-glycero-3-phosphocholine = a 1-acyl-sn-glycero-2,3-cyclic phosphate + choline. It catalyses the reaction a 1-acyl-sn-glycero-3-phosphoethanolamine = a 1-acyl-sn-glycero-2,3-cyclic phosphate + ethanolamine. Its function is as follows. Dermonecrotic toxins cleave the phosphodiester linkage between the phosphate and headgroup of certain phospholipids (sphingolipid and lysolipid substrates), forming an alcohol (often choline) and a cyclic phosphate. This toxin acts on sphingomyelin (SM). It may also act on ceramide phosphoethanolamine (CPE), lysophosphatidylcholine (LPC) and lysophosphatidylethanolamine (LPE), but not on lysophosphatidylserine (LPS), and lysophosphatidylglycerol (LPG). It acts by transphosphatidylation, releasing exclusively cyclic phosphate products as second products. Induces dermonecrosis, hemolysis, increased vascular permeability, edema, inflammatory response, and platelet aggregation. This chain is Dermonecrotic toxin LhSicTox-alphaIV1ii, found in Loxosceles hirsuta (Recluse spider).